The chain runs to 151 residues: Large-conductance mechanosensitive channel (151 aa).

2 helical membrane passes run 14 to 34 and 85 to 105; these read VVDM…VNSL and GLFV…FLLV.

The protein belongs to the MscL family. In terms of assembly, homopentamer.

It is found in the cell inner membrane. In terms of biological role, channel that opens in response to stretch forces in the membrane lipid bilayer. May participate in the regulation of osmotic pressure changes within the cell. This chain is Large-conductance mechanosensitive channel, found in Chlorobaculum tepidum (strain ATCC 49652 / DSM 12025 / NBRC 103806 / TLS) (Chlorobium tepidum).